The chain runs to 1460 residues: Nucleoporin NUP159 (1460 aa).

Residues 1–500 (MSSLKDEVPT…SEQDATDPAS (500 aa)) form an interaction with DBP5 region. Residues 228–231 (AVFG) form an FG 1 repeat. The PXFG 1 repeat unit spans residues 267–270 (PPFG). Residues 401–435 (KSLSPTSEKIPIAGQEQEEKKKNNESSKALSENPF) form a disordered region. A Phosphoserine modification is found at serine 404. One copy of the SXFGXPXFG 1 repeat lies at 462–470 (STFGAPSFG). The tract at residues 483 to 504 (STSTGVASSEQDATDPASAKPV) is disordered. Residues 497-701 (DPASAKPVFG…KPNTSTKPKT (205 aa)) are interactions with CRM1 and GLE1. Residues 503–511 (PVFGKPAFG) form an SXFGXPXFG 2; approximate repeat. The stretch at 522–530 (YAFGKPSFG) is one SXFGXPXFG 3; approximate repeat. The PXFG 2 repeat unit spans residues 532–535 (PSFG). The tract at residues 533 to 619 (SFGSGKSSVE…SAFGTASSNE (87 aa)) is disordered. Composition is skewed to polar residues over residues 536–546 (SGKSSVESPAS), 556–567 (GTPSFGSGNSSV), 582–593 (GTPSFGSGNSSA), and 607–619 (FGTSAFGTASSNE). The stretch at 548–556 (SAFGKPSFG) is one SXFGXPXFG 4 repeat. One copy of the PXFG 3 repeat lies at 558 to 561 (PSFG). The SXFGXPXFG 5 repeat unit spans residues 574–582 (SAFGKPSFG). The stretch at 584 to 587 (PSFG) is one PXFG 4 repeat. The SXFGXPXFG 6 repeat unit spans residues 600 to 608 (SAFGKPSFG). The SXFG 1 repeat unit spans residues 610–613 (SAFG). One copy of the SXFGXPXFG 7; approximate repeat lies at 624 to 632 (SIFGKAAFG). Residues 642–645 (ELFG) form an FG 2 repeat. Residues 647 to 704 (NFTISKPTVDSPKEVDSTSPFPSSGDQSEDESKSDVDSSSTPFGTKPNTSTKPKTNAF) are disordered. Serine 657 carries the phosphoserine modification. Positions 683 to 704 (DSSSTPFGTKPNTSTKPKTNAF) are enriched in low complexity. An FG 3 repeat occupies 687–690 (TPFG). An FXFG 1 repeat occupies 704-707 (FDFG). An SXFG 2 repeat occupies 709-712 (SSFG). Serine 724 bears the Phosphoserine mark. Composition is skewed to polar residues over residues 727-750 (TFKFGTQASPFSSQLGNKSPFSSF), 757-767 (NGSLSKGSTSE), and 778-800 (NGPNVSGNDLTDSTVEQTSSTRL). The disordered stretch occupies residues 727 to 824 (TFKFGTQASP…EAQKSPIGKL (98 aa)). The stretch at 728–731 (FKFG) is one FXFG 2 repeat. Serine 735 and serine 745 each carry phosphoserine. Threonine 803 carries the post-translational modification Phosphothreonine. The segment covering 804-814 (PSDEDGEVVEE) has biased composition (acidic residues). Residues serine 805 and serine 819 each carry the phosphoserine modification. One copy of the PXFG 5 repeat lies at 842–845 (PVFG). The span at 861–889 (TNITKPSSTTPAFSFGNSTMNKSNTSTVS) shows a compositional bias: polar residues. A disordered region spans residues 861–1092 (TNITKPSSTT…DINTDELPHG (232 aa)). The FXFG 3 repeat unit spans residues 873-876 (FSFG). Serine 889 carries the post-translational modification Phosphoserine. Residues 917-936 (AKEERTGESSKKDHNDDPKD) are compositionally biased toward basic and acidic residues. Position 940 is a phosphoserine (serine 940). A compositionally biased stretch (polar residues) spans 942–958 (SEISVRTSESAFDTTAN). Composition is skewed to basic and acidic residues over residues 960–1002 (EIPK…KNNE), 1017–1027 (ALKKDNEKENF), 1035–1061 (QFEDHQSSEEDASEKDSRQSSEVKESD), and 1068–1092 (SDRDESISESYDKLEDINTDELPHG). The interval 1086–1175 (TDELPHGGEA…TCNFSVQTFE (90 aa)) is interaction with DYN2. Positions 1223–1460 (AEFTVLMENI…DFFKNLNMAK (238 aa)) are interaction with NUP82. Coiled-coil stretches lie at residues 1279-1320 (EQMQ…YLFL) and 1383-1418 (AKLAKESLARDGLLKEIKLLREQVSRLQLEEKGKKA).

As to quaternary structure, component of the nuclear pore complex (NPC). NPC constitutes the exclusive means of nucleocytoplasmic transport. NPCs allow the passive diffusion of ions and small molecules and the active, nuclear transport receptor-mediated bidirectional transport of macromolecules such as proteins, RNAs, ribonucleoparticles (RNPs), and ribosomal subunits across the nuclear envelope. Due to its 8-fold rotational symmetry, all subunits are present with 8 copies or multiples thereof. Part of the NUP82 subcomplex, interacts with NUP82 through its C-terminal coiled coil. This subcomplex is the base for interactions with NUP116 and GLE2, with NUP42 and GLE1 and with DYN2. Interacts directly with DYN2. Interacts through its FG repeats with karyopherins, such as heterodimeric mRNA transport factor MEX67/MTR2, CRM1 (XPO1), and PSE1 (GSP1-GDP dependent). Interaction with CRM1 (XPO1) is GSP1-GTP dependent and stimulated by RNA1. NUP159 also interacts with GLE1 and the ATP-dependent RNA helicase DBP5.

The protein resides in the nucleus. It localises to the nuclear pore complex. The protein localises to the nucleus membrane. Functionally, functions as a component of the nuclear pore complex (NPC). NPC components, collectively referred to as nucleoporins (NUPs), can play the role of both NPC structural components and of docking or interaction partners for transiently associated nuclear transport factors. Active directional transport is assured by both, a Phe-Gly (FG) repeat affinity gradient for these transport factors across the NPC and a transport cofactor concentration gradient across the nuclear envelope (GSP1 and GSP2 GTPases associated predominantly with GTP in the nucleus, with GDP in the cytoplasm). NUP159 plays an important role in several nuclear export pathways including poly(A)+ RNA, pre-ribosome, and protein export. This Saccharomyces cerevisiae (strain ATCC 204508 / S288c) (Baker's yeast) protein is Nucleoporin NUP159 (NUP159).